Reading from the N-terminus, the 389-residue chain is Chalcone synthase 4-2 (389 aa).

The active site involves C164.

This sequence belongs to the thiolase-like superfamily. Chalcone/stilbene synthases family.

It catalyses the reaction (E)-4-coumaroyl-CoA + 3 malonyl-CoA + 3 H(+) = 2',4,4',6'-tetrahydroxychalcone + 3 CO2 + 4 CoA. The protein operates within secondary metabolite biosynthesis; flavonoid biosynthesis. Its function is as follows. The primary product of this enzyme is 4,2',4',6'-tetrahydroxychalcone (also termed naringenin-chalcone or chalcone) which can under specific conditions spontaneously isomerize into naringenin. The protein is Chalcone synthase 4-2 (CHS4-2) of Medicago sativa (Alfalfa).